The chain runs to 319 residues: Cytochrome f (319 aa).

The N-terminal stretch at 1-35 (MQNKDACKSLSSWVSLSISLLVLTVPLIWPYNSTA) is a signal peptide. The heme site is built by phenylalanine 36, cysteine 56, cysteine 59, and histidine 60. A helical transmembrane segment spans residues 285–305 (IQGLLVFFASVILAQIFLVLK).

It belongs to the cytochrome f family. The 4 large subunits of the cytochrome b6-f complex are cytochrome b6, subunit IV (17 kDa polypeptide, petD), cytochrome f and the Rieske protein, while the 4 small subunits are PetG, PetL, PetM and PetN. The complex functions as a dimer. Heme is required as a cofactor.

Its subcellular location is the plastid. The protein localises to the chloroplast thylakoid membrane. Functionally, component of the cytochrome b6-f complex, which mediates electron transfer between photosystem II (PSII) and photosystem I (PSI), cyclic electron flow around PSI, and state transitions. The polypeptide is Cytochrome f (Staurastrum punctulatum (Green alga)).